Here is a 215-residue protein sequence, read N- to C-terminus: Putative BTB/POZ domain-containing protein At2g05330 (215 aa).

Residues 17-87 (SWQKIGKLTY…LYSDGSMLSS (71 aa)) enclose the BTB domain.

Its pathway is protein modification; protein ubiquitination. In terms of biological role, may act as a substrate-specific adapter of an E3 ubiquitin-protein ligase complex (CUL3-RBX1-BTB) which mediates the ubiquitination and subsequent proteasomal degradation of target proteins. This is Putative BTB/POZ domain-containing protein At2g05330 from Arabidopsis thaliana (Mouse-ear cress).